Reading from the N-terminus, the 324-residue chain is MKQVDGEKLLARLGPGVDALRGRLTPDAPMDRVTWFQAGGLAELMFQPHDRDDLVTFLKLLPDDVPLTVVGVGSNLLVRDGGIPGVVIRLSAKGFGGLELEGENRIRAGAICPDKHIAAMAMDNNIGGFAFYYGIPGSIGGALRMNAGANGGETAERVIEVEAVDRQGNLHVLSKADMGYGYRHSSAPEGLIFISGLFEGFSQEKSAIRAEMDAVRQHRETVQPVKEKTGGSTFKNPEGHSAWELIDEVGGRGLMIGGAQMSSLHCNFMINVGHATAYDLEYLGETIRGQVFEQSGIKLQWEIKRLGLFMPGSEVKPFMGVTSE.

The region spanning Ala-38–Gln-217 is the FAD-binding PCMH-type domain. Residue Arg-183 is part of the active site. Residue Ser-232 is the Proton donor of the active site. Glu-302 is a catalytic residue.

It belongs to the MurB family. It depends on FAD as a cofactor.

The protein localises to the cytoplasm. It catalyses the reaction UDP-N-acetyl-alpha-D-muramate + NADP(+) = UDP-N-acetyl-3-O-(1-carboxyvinyl)-alpha-D-glucosamine + NADPH + H(+). It participates in cell wall biogenesis; peptidoglycan biosynthesis. Cell wall formation. The protein is UDP-N-acetylenolpyruvoylglucosamine reductase of Allorhizobium ampelinum (strain ATCC BAA-846 / DSM 112012 / S4) (Agrobacterium vitis (strain S4)).